The chain runs to 749 residues: Soluble starch synthase 2-1, chloroplastic/amyloplastic (749 aa).

The transit peptide at 1 to 44 (MAAAAVSSLLAPSGSCYSPGCHSCWGPGPGGGRRLPSPRRRPIT) directs the protein to the chloroplast. Lysine 272 contacts ADP-alpha-D-glucose.

This sequence belongs to the glycosyltransferase 1 family. Bacterial/plant glycogen synthase subfamily. As to expression, expressed in endosperm, leaves, and weakly in roots.

It is found in the plastid. The protein localises to the amyloplast. The protein resides in the chloroplast. The enzyme catalyses [(1-&gt;4)-alpha-D-glucosyl](n) + ADP-alpha-D-glucose = [(1-&gt;4)-alpha-D-glucosyl](n+1) + ADP + H(+). The protein operates within glycan biosynthesis; starch biosynthesis. In terms of biological role, may be involved in starch synthesis in endosperm amyloplasts and contribute to the deposition of transient starch in chloroplasts of leaves. The sequence is that of Soluble starch synthase 2-1, chloroplastic/amyloplastic (SSII-1) from Oryza sativa subsp. japonica (Rice).